A 219-amino-acid polypeptide reads, in one-letter code: Thiopurine S-methyltransferase (219 aa).

S-adenosyl-L-methionine contacts are provided by W10, L45, E66, and R123.

This sequence belongs to the class I-like SAM-binding methyltransferase superfamily. TPMT family.

It localises to the cytoplasm. It carries out the reaction S-adenosyl-L-methionine + a thiopurine = S-adenosyl-L-homocysteine + a thiopurine S-methylether.. The protein is Thiopurine S-methyltransferase of Marinobacter nauticus (strain ATCC 700491 / DSM 11845 / VT8) (Marinobacter aquaeolei).